The following is a 322-amino-acid chain: Putative membrane-bound redox modulator Alx (322 aa).

Residues 1-6 lie on the Periplasmic side of the membrane; the sequence is MNTVGT. The chain crosses the membrane as a helical span at residues 7-27; the sequence is PLLWGGFAVVVVIMLSIDLLL. The Cytoplasmic segment spans residues 28 to 43; that stretch reads QGRRGAHAMSMKQAAG. A helical transmembrane segment spans residues 44–64; it reads WSILWVTLSLLFNAAFWWYLA. The Periplasmic portion of the chain corresponds to 65–89; the sequence is ETQGREVADPQALAFLTGYLIEKSL. Residues 90 to 110 form a helical membrane-spanning segment; it reads AVDNVFVWLMLFSYFSVPPAL. At 111–113 the chain is on the cytoplasmic side; that stretch reads QRR. A helical transmembrane segment spans residues 114–134; sequence VLVYGVLGAIVLRTIMIFAGT. Residue W135 is a topological domain, periplasmic. The chain crosses the membrane as a helical span at residues 136 to 156; the sequence is LITQFEWLLYVFGAFLLFTGV. Residues 157 to 198 are Cytoplasmic-facing; that stretch reads KMALAKEDESGIGEKPMVRWLRGHLRMTDTIENEHFFVRKNG. A helical membrane pass occupies residues 199–219; the sequence is LLYATPLLLVLIMVEFSDVIF. Residues 220–225 are Periplasmic-facing; sequence AVDSIP. The helical transmembrane segment at 226-246 threads the bilayer; it reads AIFAVTTDPFIVLTSNLFAIL. Topologically, residues 247–261 are cytoplasmic; sequence GLRAMYFLLSGVAER. A helical transmembrane segment spans residues 262 to 282; that stretch reads FSMLKYGLAVILVFIGIKMLI. Residues 283–286 are Periplasmic-facing; sequence VDFY. A helical transmembrane segment spans residues 287–307; it reads HIPIAISLGVVFGILTITLVI. The Cytoplasmic portion of the chain corresponds to 308–321; the sequence is NTWVNHQRDKKLRA.

It belongs to the TerC family.

Its subcellular location is the cell inner membrane. Functionally, has been proposed to be a redox modulator. This Salmonella typhi protein is Putative membrane-bound redox modulator Alx (alx).